The chain runs to 329 residues: DNA-directed RNA polymerase subunit alpha (329 aa).

An alpha N-terminal domain (alpha-NTD) region spans residues 1–234; the sequence is MQGSVTEFLK…EQLDAFVELR (234 aa). The segment at 248–329 is alpha C-terminal domain (alpha-CTD); it reads FDPILLRPVD…WPPASLADDL (82 aa).

Belongs to the RNA polymerase alpha chain family. In terms of assembly, homodimer. The RNAP catalytic core consists of 2 alpha, 1 beta, 1 beta' and 1 omega subunit. When a sigma factor is associated with the core the holoenzyme is formed, which can initiate transcription.

The catalysed reaction is RNA(n) + a ribonucleoside 5'-triphosphate = RNA(n+1) + diphosphate. Functionally, DNA-dependent RNA polymerase catalyzes the transcription of DNA into RNA using the four ribonucleoside triphosphates as substrates. The chain is DNA-directed RNA polymerase subunit alpha from Shewanella putrefaciens (strain CN-32 / ATCC BAA-453).